We begin with the raw amino-acid sequence, 546 residues long: Probable ganciclovir kinase (546 aa).

Residues M1–K11 show a composition bias toward polar residues. The interval M1–R29 is disordered. The segment covering T12–R29 has biased composition (basic residues). ATP is bound by residues L185–V193 and K202. The active-site Proton acceptor is the D297.

Belongs to the protein kinase superfamily. Tyr protein kinase family. HCMV ganciclovir subfamily.

Phosphorylates the antiviral nucleoside analog ganciclovir. In Human herpesvirus 7 (strain JI) (HHV-7), this protein is Probable ganciclovir kinase (U69).